Consider the following 113-residue polypeptide: uncharacterized protein (113 aa).

This sequence belongs to the HesB/IscA family.

This is an uncharacterized protein from Synechocystis sp. (strain ATCC 27184 / PCC 6803 / Kazusa).